We begin with the raw amino-acid sequence, 224 residues long: ATP-dependent dethiobiotin synthetase BioD (224 aa).

Position 18 (T18) interacts with Mg(2+). K39 is a catalytic residue. S43 is a substrate binding site. 2 residues coordinate Mg(2+): D56 and E117. Residues D56, 117-120 (EGVG), and 177-178 (NE) each bind ATP.

This sequence belongs to the dethiobiotin synthetase family. As to quaternary structure, homodimer. Mg(2+) serves as cofactor.

It localises to the cytoplasm. The enzyme catalyses (7R,8S)-7,8-diammoniononanoate + CO2 + ATP = (4R,5S)-dethiobiotin + ADP + phosphate + 3 H(+). It participates in cofactor biosynthesis; biotin biosynthesis; biotin from 7,8-diaminononanoate: step 1/2. Its function is as follows. Catalyzes a mechanistically unusual reaction, the ATP-dependent insertion of CO2 between the N7 and N8 nitrogen atoms of 7,8-diaminopelargonic acid (DAPA, also called 7,8-diammoniononanoate) to form a ureido ring. The sequence is that of ATP-dependent dethiobiotin synthetase BioD from Xanthomonas oryzae pv. oryzae (strain MAFF 311018).